A 480-amino-acid chain; its full sequence is Glutamate--tRNA ligase (480 aa).

The 'HIGH' region signature appears at 21 to 31 (PSPTGYLHVGG). Residues Cys110, Cys112, Cys137, and His139 each coordinate Zn(2+). The short motif at 248-252 (KLSKR) is the 'KMSKS' region element. An ATP-binding site is contributed by Lys251.

The protein belongs to the class-I aminoacyl-tRNA synthetase family. Glutamate--tRNA ligase type 1 subfamily. As to quaternary structure, monomer. Requires Zn(2+) as cofactor.

The protein localises to the cytoplasm. The catalysed reaction is tRNA(Glu) + L-glutamate + ATP = L-glutamyl-tRNA(Glu) + AMP + diphosphate. In terms of biological role, catalyzes the attachment of glutamate to tRNA(Glu) in a two-step reaction: glutamate is first activated by ATP to form Glu-AMP and then transferred to the acceptor end of tRNA(Glu). This is Glutamate--tRNA ligase from Histophilus somni (strain 2336) (Haemophilus somnus).